The following is a 169-amino-acid chain: Protein UL138 (169 aa).

Residues 8–28 traverse the membrane as a helical segment; the sequence is VGLPIIGVMLVLIVAILCYLA. Positions 109 to 133 are disordered; that stretch reads DRRAGSSSSSSVHVANQRNSVPPPD.

In terms of assembly, interacts with host TNFR1. Interacts with host MRP1. Interacts with host UAF1/WDR48. Interacts with host STING1.

It is found in the host Golgi apparatus membrane. In terms of biological role, plays an important role in the establishment of latent viral infection. Modulates the expression of several host cell surface receptors such as TNFR1, CD36 or the MRP1 transporter during productive infection. For instance, associates with host MRP1 and induces its lysosomal degradation. Plays an inhibitory role in the host cGAS/STING/TBK1 pathway and upstream of IRF3 phosphorylation and NF-kappa-B leading to inhibition of interferon beta production during both lytic and latent infections. Also participates in the establishment of latency by sustaining an innate immune response through phosphorylation and activation of host STAT1. The chain is Protein UL138 (UL138) from Human cytomegalovirus (strain Merlin) (HHV-5).